Consider the following 1409-residue polypeptide: Protein three rows (1409 aa).

The tract at residues 1052-1058 (VEPIRKQ) is separase cleavage-site. Disordered regions lie at residues 1260–1284 (PIGC…SDHV) and 1297–1409 (DDAA…RQRN). Composition is skewed to low complexity over residues 1264–1273 (SNSSSSSSKS) and 1300–1310 (ASVSASTPAPS).

Interacts with pim and Sse. Cleavage of thr contributes to inactivation of Sse.

It is found in the cytoplasm. Required specifically for chromosome disjunction during all mitoses; maternally provided protein is sufficient until mitosis 14 then zygotic protein is required. Involved in formation and/or maintenance of epithelial structures: bud extension during Malpighian tubule development, and foregut and hindgut morphogenesis. In Drosophila pseudoobscura pseudoobscura (Fruit fly), this protein is Protein three rows (thr).